The primary structure comprises 329 residues: Tetraacyldisaccharide 4'-kinase (329 aa).

57-64 (TAGGSGKT) provides a ligand contact to ATP.

The protein belongs to the LpxK family.

The catalysed reaction is a lipid A disaccharide + ATP = a lipid IVA + ADP + H(+). Its pathway is glycolipid biosynthesis; lipid IV(A) biosynthesis; lipid IV(A) from (3R)-3-hydroxytetradecanoyl-[acyl-carrier-protein] and UDP-N-acetyl-alpha-D-glucosamine: step 6/6. Transfers the gamma-phosphate of ATP to the 4'-position of a tetraacyldisaccharide 1-phosphate intermediate (termed DS-1-P) to form tetraacyldisaccharide 1,4'-bis-phosphate (lipid IVA). The chain is Tetraacyldisaccharide 4'-kinase from Thiobacillus denitrificans (strain ATCC 25259 / T1).